The primary structure comprises 340 residues: Ketol-acid reductoisomerase (NADP(+)) (340 aa).

One can recognise a KARI N-terminal Rossmann domain in the interval 3–183; that stretch reads LSVYYDKDCN…GGGRTGIIET (181 aa). NADP(+)-binding positions include 26–29, S54, and 84–87; these read FGSQ and DELQ. The active site involves H109. Position 135 (G135) interacts with NADP(+). Residues 184-329 form the KARI C-terminal knotted domain; sequence TFKDETETDL…ERLRAMMPWI (146 aa). 4 residues coordinate Mg(2+): D192, E196, E228, and E232. Position 253 (S253) interacts with substrate.

The protein belongs to the ketol-acid reductoisomerase family. Requires Mg(2+) as cofactor.

The enzyme catalyses (2R)-2,3-dihydroxy-3-methylbutanoate + NADP(+) = (2S)-2-acetolactate + NADPH + H(+). It catalyses the reaction (2R,3R)-2,3-dihydroxy-3-methylpentanoate + NADP(+) = (S)-2-ethyl-2-hydroxy-3-oxobutanoate + NADPH + H(+). The protein operates within amino-acid biosynthesis; L-isoleucine biosynthesis; L-isoleucine from 2-oxobutanoate: step 2/4. It functions in the pathway amino-acid biosynthesis; L-valine biosynthesis; L-valine from pyruvate: step 2/4. Functionally, involved in the biosynthesis of branched-chain amino acids (BCAA). Catalyzes an alkyl-migration followed by a ketol-acid reduction of (S)-2-acetolactate (S2AL) to yield (R)-2,3-dihydroxy-isovalerate. In the isomerase reaction, S2AL is rearranged via a Mg-dependent methyl migration to produce 3-hydroxy-3-methyl-2-ketobutyrate (HMKB). In the reductase reaction, this 2-ketoacid undergoes a metal-dependent reduction by NADPH to yield (R)-2,3-dihydroxy-isovalerate. The polypeptide is Ketol-acid reductoisomerase (NADP(+)) (Wolinella succinogenes (strain ATCC 29543 / DSM 1740 / CCUG 13145 / JCM 31913 / LMG 7466 / NCTC 11488 / FDC 602W) (Vibrio succinogenes)).